Reading from the N-terminus, the 142-residue chain is Transcriptional regulator MraZ (142 aa).

SpoVT-AbrB domains follow at residues Glu5–Glu47 and Ala76–Lys119.

The protein belongs to the MraZ family. In terms of assembly, forms oligomers.

The protein localises to the cytoplasm. It is found in the nucleoid. This Clostridium beijerinckii (strain ATCC 51743 / NCIMB 8052) (Clostridium acetobutylicum) protein is Transcriptional regulator MraZ.